The sequence spans 422 residues: UDP-N-acetylglucosamine 1-carboxyvinyltransferase (422 aa).

Position 22 to 23 (22 to 23) interacts with phosphoenolpyruvate; sequence KN. Arginine 92 is a UDP-N-acetyl-alpha-D-glucosamine binding site. Cysteine 116 serves as the catalytic Proton donor. Residue cysteine 116 is modified to 2-(S-cysteinyl)pyruvic acid O-phosphothioketal. Residues 121–125, aspartate 307, and leucine 329 contribute to the UDP-N-acetyl-alpha-D-glucosamine site; that span reads RPVDL.

Belongs to the EPSP synthase family. MurA subfamily.

It is found in the cytoplasm. The enzyme catalyses phosphoenolpyruvate + UDP-N-acetyl-alpha-D-glucosamine = UDP-N-acetyl-3-O-(1-carboxyvinyl)-alpha-D-glucosamine + phosphate. The protein operates within cell wall biogenesis; peptidoglycan biosynthesis. In terms of biological role, cell wall formation. Adds enolpyruvyl to UDP-N-acetylglucosamine. The chain is UDP-N-acetylglucosamine 1-carboxyvinyltransferase from Aliarcobacter butzleri (strain RM4018) (Arcobacter butzleri).